A 149-amino-acid polypeptide reads, in one-letter code: Protein AE7-like 2 (149 aa).

The protein belongs to the MIP18 family.

Its function is as follows. May play a role in chromosome segregation through establishment of sister chromatid cohesion. Unable to complement ae7 mutants, and thus probably not involved in the cytosolic iron-sulfur assembly (CIA) pathway. The chain is Protein AE7-like 2 from Arabidopsis thaliana (Mouse-ear cress).